A 166-amino-acid chain; its full sequence is Large ribosomal subunit protein uL10 (166 aa).

It belongs to the universal ribosomal protein uL10 family. As to quaternary structure, part of the ribosomal stalk of the 50S ribosomal subunit. The N-terminus interacts with L11 and the large rRNA to form the base of the stalk. The C-terminus forms an elongated spine to which L12 dimers bind in a sequential fashion forming a multimeric L10(L12)X complex.

Forms part of the ribosomal stalk, playing a central role in the interaction of the ribosome with GTP-bound translation factors. This chain is Large ribosomal subunit protein uL10, found in Aeromonas salmonicida (strain A449).